A 263-amino-acid chain; its full sequence is Protein IQ-DOMAIN 9 (263 aa).

The disordered stretch occupies residues Ser16–Leu41. Positions Glu21–Val28 match the Nuclear localization signal 1 motif. A compositionally biased stretch (basic residues) spans Thr25 to Gly38. One can recognise an IQ domain in the interval Glu46–Ala75. The interval Ala59–Ser78 is calmodulin-binding. Positions Ala107–Thr114 match the Nuclear localization signal 2 motif. A disordered region spans residues Thr216–Ala263. A compositionally biased stretch (polar residues) spans Asp226–Pro241.

It belongs to the IQD family. In terms of assembly, binds to multiple calmodulin (CaM) in the presence of Ca(2+) and CaM-like proteins.

The protein localises to the nucleus. Its subcellular location is the nuclear body. Functionally, may be involved in cooperative interactions with calmodulins or calmodulin-like proteins. Recruits calmodulin proteins to microtubules, thus being a potential scaffold in cellular signaling and trafficking. May associate with nucleic acids and regulate gene expression at the transcriptional or post-transcriptional level. The protein is Protein IQ-DOMAIN 9 of Arabidopsis thaliana (Mouse-ear cress).